Consider the following 333-residue polypeptide: Ketol-acid reductoisomerase (NADP(+)) (333 aa).

The KARI N-terminal Rossmann domain maps to 2–182; the sequence is AKIYYDEDAS…GATRAGVIET (181 aa). Residues 25 to 28, Ser51, Ser53, and 83 to 86 each bind NADP(+); these read YGSQ and DTVQ. His108 is an active-site residue. Gly134 lines the NADP(+) pocket. One can recognise a KARI C-terminal knotted domain in the interval 183–327; sequence TFKEETETDL…EELRKMMPWL (145 aa). Mg(2+)-binding residues include Asp191, Glu195, Glu227, and Glu231. Ser252 contacts substrate.

The protein belongs to the ketol-acid reductoisomerase family. The cofactor is Mg(2+).

The enzyme catalyses (2R)-2,3-dihydroxy-3-methylbutanoate + NADP(+) = (2S)-2-acetolactate + NADPH + H(+). It carries out the reaction (2R,3R)-2,3-dihydroxy-3-methylpentanoate + NADP(+) = (S)-2-ethyl-2-hydroxy-3-oxobutanoate + NADPH + H(+). It participates in amino-acid biosynthesis; L-isoleucine biosynthesis; L-isoleucine from 2-oxobutanoate: step 2/4. The protein operates within amino-acid biosynthesis; L-valine biosynthesis; L-valine from pyruvate: step 2/4. Its function is as follows. Involved in the biosynthesis of branched-chain amino acids (BCAA). Catalyzes an alkyl-migration followed by a ketol-acid reduction of (S)-2-acetolactate (S2AL) to yield (R)-2,3-dihydroxy-isovalerate. In the isomerase reaction, S2AL is rearranged via a Mg-dependent methyl migration to produce 3-hydroxy-3-methyl-2-ketobutyrate (HMKB). In the reductase reaction, this 2-ketoacid undergoes a metal-dependent reduction by NADPH to yield (R)-2,3-dihydroxy-isovalerate. The polypeptide is Ketol-acid reductoisomerase (NADP(+)) (Aquifex aeolicus (strain VF5)).